The following is a 117-amino-acid chain: DNA polymerase epsilon subunit 4 (117 aa).

The segment at methionine 1 to alanine 36 is disordered. Residue alanine 2 is modified to N-acetylalanine. At threonine 11 the chain carries Phosphothreonine. Over residues alanine 19 to proline 30 the composition is skewed to low complexity. Position 25 is a phosphoserine (serine 25).

In terms of assembly, component of the DNA polymerase epsilon complex consisting of four subunits: the catalytic subunit POLE and the accessory subunits POLE2, POLE3 and POLE4. Interaction with POLE3 is a prerequisite for further binding with POLE and POLE2.

The protein resides in the nucleus. In terms of biological role, accessory component of the DNA polymerase epsilon complex. Participates in DNA repair and in chromosomal DNA replication. This Homo sapiens (Human) protein is DNA polymerase epsilon subunit 4 (POLE4).